The primary structure comprises 410 residues: LanC-like protein GCR2 (410 aa).

Zn(2+)-binding residues include C283, C328, and H329.

Belongs to the LanC-like protein family. In terms of assembly, may interact (via C-terminus) with GPA1.

Its function is as follows. May play a role in abscisic acid (ABA) signaling. The polypeptide is LanC-like protein GCR2 (GCR2) (Arabidopsis thaliana (Mouse-ear cress)).